A 727-amino-acid polypeptide reads, in one-letter code: Transcription activator of gluconeogenesis TRV_01442 (727 aa).

The span at 1 to 32 shows a compositional bias: polar residues; that stretch reads MSPHQTTGQESDNMTVNGENAQASSQYIQSNE. The interval 1–62 is disordered; it reads MSPHQTTGQE…PSRPKRKKAK (62 aa). Over residues 39 to 55 the composition is skewed to basic and acidic residues; sequence ATEKKASAAKAAKDPSR. Positions 65–93 form a DNA-binding region, zn(2)-C6 fungal-type; sequence CYACQRGHLTCGDERPCQRCIKRGFQDAC. Composition is skewed to polar residues over residues 129–213, 267–277, and 361–379; these read NNVN…TPSA, PSDSGAQRGSI, and MMTT…GAFN. Disordered stretches follow at residues 129 to 224, 264 to 297, 353 to 399, 533 to 567, and 627 to 666; these read NNVN…FNST, DTPP…ESPS, SPAS…STPQ, NHNV…YNSS, and GSNG…QRRW. Low complexity-rich tracts occupy residues 380–399 and 543–553; these read SRQN…STPQ and GLMTGSTSRGS. Polar residues predominate over residues 639–661; that stretch reads EATSNETNELNGSHTNGATTNGR.

This sequence belongs to the ERT1/acuK family.

It localises to the nucleus. Functionally, transcription factor which regulates nonfermentable carbon utilization. Activator of gluconeogenetic genes. The sequence is that of Transcription activator of gluconeogenesis TRV_01442 from Trichophyton verrucosum (strain HKI 0517).